The following is a 176-amino-acid chain: ATP-dependent protease subunit HslV (176 aa).

The active site involves threonine 2. Na(+)-binding residues include glycine 157, cysteine 160, and threonine 163.

It belongs to the peptidase T1B family. HslV subfamily. As to quaternary structure, a double ring-shaped homohexamer of HslV is capped on each side by a ring-shaped HslU homohexamer. The assembly of the HslU/HslV complex is dependent on binding of ATP.

It is found in the cytoplasm. It carries out the reaction ATP-dependent cleavage of peptide bonds with broad specificity.. With respect to regulation, allosterically activated by HslU binding. In terms of biological role, protease subunit of a proteasome-like degradation complex believed to be a general protein degrading machinery. The chain is ATP-dependent protease subunit HslV from Salmonella agona (strain SL483).